The sequence spans 119 residues: U-scoloptoxin(01)-Cw1a (119 aa).

The first 22 residues, 1–22 (MSKATNFYLFVLLGVFVALVRT), serve as a signal peptide directing secretion. Positions 38–96 (SFSCDGKKPGYYADQQMECQVYHVCTPDNEHAVLLCGPGTIFNQKHLVCDFPSNYACAD) constitute a Chitin-binding type-2 domain. The cysteines at positions 73 and 86 are disulfide-linked.

The protein belongs to the scoloptoxin-01 family. Contains 3 disulfide bonds. Expressed by the venom gland.

The protein resides in the secreted. The chain is U-scoloptoxin(01)-Cw1a from Cormocephalus westwoodi (Westwood's green centipede).